A 682-amino-acid polypeptide reads, in one-letter code: E3 ubiquitin ligase Rnf157 (682 aa).

G2 carries N-myristoyl glycine lipidation. Residues 277–317 (CVVCLSDVRDTLILPCRHCASCNVHCADTLRYQANNCPICR) form an RING-type; degenerate zinc finger. The D-box 1 signature appears at 330–333 (RKKL). Disordered stretches follow at residues 440 to 604 (QNSS…VQED) and 655 to 682 (NTQRRRLSPSSLEDPEEDRPCVWDPLAV). Residues 479–538 (ESENLTLSSSGAVDQSSCTGTPLSSTISSPEDPASSSLAQSVMSMASSQISTDTVSSMSG) are compositionally biased toward polar residues. The span at 585–597 (QDAEGNDIMEEED) shows a compositional bias: acidic residues. The D-box 2 signature appears at 658–661 (RRRL). Phosphoserine occurs at positions 662, 664, and 665.

Interacts with APBB1. Interacts with CHD1; CHD1-binding controls RNF157 stability. Also interacts with ATRN, MEGF8, TECR, MSI2, PLRG1, BYSL, MTERF3, PSMA1, MRPS18B, PRPF4, FASTKD2, SLC25A1, SMU1, CNOT9, MRPS2, MAGT1, FXR2, EMD, PSMD8, HDAC1, RAN, HSD17B12, TXNDC5 and MRPL19. As to expression, predominantly expressed in the brain.

The protein resides in the cytoplasm. It carries out the reaction S-ubiquitinyl-[E2 ubiquitin-conjugating enzyme]-L-cysteine + [acceptor protein]-L-lysine = [E2 ubiquitin-conjugating enzyme]-L-cysteine + N(6)-ubiquitinyl-[acceptor protein]-L-lysine.. Its function is as follows. E3 ubiquitin ligase that ubiquitinates APBB1 for its degradation by the proteasome and thus prevents apoptosis and promotes survival of neurons. Has a dual role in neurons as it is also required for dendrite growth and maintenance for which its ligase activity is not critical. May act as a scaffold molecule to regulate this process. Acts as a downstream effector of the interconnected PI3K and MAPK signaling pathways and thus participates in the regulation of the cell cycle. The chain is E3 ubiquitin ligase Rnf157 (Rnf157) from Rattus norvegicus (Rat).